The chain runs to 154 residues: Myoglobin (154 aa).

A Globin domain is found at 2–148 (GLSDGEWQLV…FRKDIAAKYK (147 aa)). At serine 4 the chain carries Phosphoserine. Histidine 65 is a binding site for nitrite. An O2-binding site is contributed by histidine 65. At threonine 68 the chain carries Phosphothreonine. Residue histidine 94 coordinates heme b.

This sequence belongs to the globin family. In terms of assembly, monomeric.

It localises to the cytoplasm. The protein resides in the sarcoplasm. The catalysed reaction is Fe(III)-heme b-[protein] + nitric oxide + H2O = Fe(II)-heme b-[protein] + nitrite + 2 H(+). It carries out the reaction H2O2 + AH2 = A + 2 H2O. Monomeric heme protein which primary function is to store oxygen and facilitate its diffusion within muscle tissues. Reversibly binds oxygen through a pentacoordinated heme iron and enables its timely and efficient release as needed during periods of heightened demand. Depending on the oxidative conditions of tissues and cells, and in addition to its ability to bind oxygen, it also has a nitrite reductase activity whereby it regulates the production of bioactive nitric oxide. Under stress conditions, like hypoxia and anoxia, it also protects cells against reactive oxygen species thanks to its pseudoperoxidase activity. The chain is Myoglobin (MB) from Orcinus orca (Killer whale).